The primary structure comprises 554 residues: Polyamine aminopropyltransferase 2 (554 aa).

Residues 1–13 (MIEPHAPAPPGSP) are compositionally biased toward pro residues. The interval 1-20 (MIEPHAPAPPGSPPSWGGPC) is disordered. Transmembrane regions (helical) follow at residues 37 to 57 (FLVLAGVFVCAACGLVYELEL), 69 to 89 (VTQASVVLSVMVFAMGLGSLA), 106 to 126 (AALALVGGSSAMLLYAVFAWT), 139 to 159 (ILLVAFSLAIGVLIGAEVPLL), 184 to 204 (VGALVGGLAFPFVLLPFLGQL), and 206 to 226 (GALLTGTVNAVVGAALVLGLF). A spermidine synthase region spans residues 235 to 516 (RWLLLTANAV…RTAPAPRLDP (282 aa)). The PABS domain maps to 247-492 (ALLATATVLA…SVPGPRRAAA (246 aa)). Gln-281 lines the S-methyl-5'-thioadenosine pocket. Spermidine is bound by residues His-313 and Asp-335. Residues Glu-355 and 389-390 (DA) each bind S-methyl-5'-thioadenosine. Asp-408 (proton acceptor) is an active-site residue. A disordered region spans residues 476–495 (DTGPGPGSVPGPRRAAAGPP). Over residues 485-495 (PGPRRAAAGPP) the composition is skewed to low complexity.

This sequence belongs to the spermidine/spermine synthase family. In terms of assembly, homodimer or homotetramer.

The protein localises to the cell membrane. It carries out the reaction S-adenosyl 3-(methylsulfanyl)propylamine + putrescine = S-methyl-5'-thioadenosine + spermidine + H(+). It participates in amine and polyamine biosynthesis; spermidine biosynthesis; spermidine from putrescine: step 1/1. Its function is as follows. Catalyzes the irreversible transfer of a propylamine group from the amino donor S-adenosylmethioninamine (decarboxy-AdoMet) to putrescine (1,4-diaminobutane) to yield spermidine. The polypeptide is Polyamine aminopropyltransferase 2 (Streptomyces coelicolor (strain ATCC BAA-471 / A3(2) / M145)).